The sequence spans 356 residues: Neutral protease 2 homolog MEP5 (356 aa).

A signal peptide spans 1-19 (MRVSSSLIALAALAVQALA). Positions 20–179 (LPVNELAERD…ASAIPELDKR (160 aa)) are excised as a propeptide. Intrachain disulfides connect Cys-187/Cys-259 and Cys-266/Cys-284. His-308 serves as a coordination point for Zn(2+). Glu-309 is an active-site residue. Positions 312 and 323 each coordinate Zn(2+).

It belongs to the peptidase M35 family. Zn(2+) is required as a cofactor.

It localises to the secreted. It carries out the reaction Preferential cleavage of bonds with hydrophobic residues in P1'. Also 3-Asn-|-Gln-4 and 8-Gly-|-Ser-9 bonds in insulin B chain.. In terms of biological role, secreted metalloproteinase that allows assimilation of proteinaceous substrates. Shows high activities on basic nuclear substrates such as histone and protamine. May be involved in virulence. The protein is Neutral protease 2 homolog MEP5 (MEP5) of Coccidioides posadasii (strain C735) (Valley fever fungus).